The following is a 379-amino-acid chain: Chaperone protein DnaJ (379 aa).

The 65-residue stretch at 5 to 69 (EYYERLGVDK…QKRAAYDQYG (65 aa)) folds into the J domain. Residues 141–223 (GVEKQVKYNR…CHGSGHEKVA (83 aa)) form a CR-type zinc finger. Cys154, Cys157, Cys171, Cys174, Cys197, Cys200, Cys211, and Cys214 together coordinate Zn(2+). 4 CXXCXGXG motif repeats span residues 154–161 (CHTCGGSG), 171–178 (CHKCGGRG), 197–204 (CDVCNGTG), and 211–218 (CETCHGSG).

Belongs to the DnaJ family. In terms of assembly, homodimer. Zn(2+) is required as a cofactor.

It localises to the cytoplasm. Functionally, participates actively in the response to hyperosmotic and heat shock by preventing the aggregation of stress-denatured proteins and by disaggregating proteins, also in an autonomous, DnaK-independent fashion. Unfolded proteins bind initially to DnaJ; upon interaction with the DnaJ-bound protein, DnaK hydrolyzes its bound ATP, resulting in the formation of a stable complex. GrpE releases ADP from DnaK; ATP binding to DnaK triggers the release of the substrate protein, thus completing the reaction cycle. Several rounds of ATP-dependent interactions between DnaJ, DnaK and GrpE are required for fully efficient folding. Also involved, together with DnaK and GrpE, in the DNA replication of plasmids through activation of initiation proteins. This is Chaperone protein DnaJ from Lactococcus lactis subsp. lactis (strain IL1403) (Streptococcus lactis).